A 278-amino-acid chain; its full sequence is Shikimate dehydrogenase (NADP(+)) (278 aa).

Shikimate contacts are provided by residues 19–21 (SRS) and Thr66. Lys70 (proton acceptor) is an active-site residue. Shikimate is bound by residues Asn91 and Asp106. NADP(+) is bound by residues 129–133 (GAGGA) and Phe221. Residue Tyr223 participates in shikimate binding. An NADP(+)-binding site is contributed by Gly242.

It belongs to the shikimate dehydrogenase family. Homodimer.

It catalyses the reaction shikimate + NADP(+) = 3-dehydroshikimate + NADPH + H(+). The protein operates within metabolic intermediate biosynthesis; chorismate biosynthesis; chorismate from D-erythrose 4-phosphate and phosphoenolpyruvate: step 4/7. Involved in the biosynthesis of the chorismate, which leads to the biosynthesis of aromatic amino acids. Catalyzes the reversible NADPH linked reduction of 3-dehydroshikimate (DHSA) to yield shikimate (SA). The polypeptide is Shikimate dehydrogenase (NADP(+)) (Anaeromyxobacter dehalogenans (strain 2CP-C)).